Here is a 151-residue protein sequence, read N- to C-terminus: Coiled-coil-helix-coiled-coil-helix domain-containing protein 2 (151 aa).

Disordered stretches follow at residues 1–50 (MPRG…AAAP) and 77–111 (GHAI…AQQQ). The segment covering 10-26 (SRMAPPASRAPQMRAAP) has biased composition (low complexity). Residues 27 to 38 (RPAPVAQPPAAA) are compositionally biased toward pro residues. Composition is skewed to low complexity over residues 39-50 (PPSAVGSSAAAP) and 100-111 (QEPQGTQPAQQQ). The CHCH domain maps to 111–151 (QQPCLYEIKQFLECAQNQGDIKLCEGFNEVLKQCRLANGLA). 2 short sequence motifs (cx9C motif) span residues 114 to 124 (CLYEIKQFLEC) and 134 to 144 (CEGFNEVLKQC). 2 cysteine pairs are disulfide-bonded: Cys-114-Cys-144 and Cys-124-Cys-134.

As to quaternary structure, interacts with RBPJ.

It is found in the nucleus. Its subcellular location is the mitochondrion. It localises to the mitochondrion intermembrane space. Its function is as follows. Transcription factor. Binds to the oxygen responsive element of COX4I2 and activates its transcription under hypoxia conditions (4% oxygen), as well as normoxia conditions (20% oxygen). The sequence is that of Coiled-coil-helix-coiled-coil-helix domain-containing protein 2 (CHCHD2) from Homo sapiens (Human).